A 152-amino-acid chain; its full sequence is Sec-independent protein translocase protein TatB (152 aa).

The helical transmembrane segment at 1 to 21 (MFDVAPSELLLVAVVALVVIG) threads the bilayer. Residues 60 to 71 (EDMEKRWAEENA) show a composition bias toward basic and acidic residues. The disordered stretch occupies residues 60 to 152 (EDMEKRWAEE…KEADQQEKQS (93 aa)). 2 stretches are compositionally biased toward low complexity: residues 84 to 98 (TASTSSPATPSPVSD) and 124 to 140 (AANHTETTATTAASTPA). Over residues 141-152 (KPKEADQQEKQS) the composition is skewed to basic and acidic residues.

Belongs to the TatB family. In terms of assembly, the Tat system comprises two distinct complexes: a TatABC complex, containing multiple copies of TatA, TatB and TatC subunits, and a separate TatA complex, containing only TatA subunits. Substrates initially bind to the TatABC complex, which probably triggers association of the separate TatA complex to form the active translocon.

The protein localises to the cell inner membrane. In terms of biological role, part of the twin-arginine translocation (Tat) system that transports large folded proteins containing a characteristic twin-arginine motif in their signal peptide across membranes. Together with TatC, TatB is part of a receptor directly interacting with Tat signal peptides. TatB may form an oligomeric binding site that transiently accommodates folded Tat precursor proteins before their translocation. The protein is Sec-independent protein translocase protein TatB of Zymomonas mobilis subsp. mobilis (strain ATCC 31821 / ZM4 / CP4).